The primary structure comprises 162 residues: Disulfide bond formation protein B (162 aa).

Topologically, residues Met-1–Ile-4 are cytoplasmic. A helical transmembrane segment spans residues Phe-5 to Tyr-21. Residues Leu-22–Ile-39 are Periplasmic-facing. Cys-31 and Cys-34 are disulfide-bonded. The chain crosses the membrane as a helical span at residues Ala-40 to Pro-56. At Gln-57–His-62 the chain is on the cytoplasmic side. Residues Ile-63–Gly-80 form a helical membrane-spanning segment. The Periplasmic segment spans residues Arg-81–Asp-136. Cys-94 and Cys-122 are oxidised to a cystine. The chain crosses the membrane as a helical span at residues Trp-137–Lys-155. At Lys-156–Gln-162 the chain is on the cytoplasmic side.

The protein belongs to the DsbB family.

The protein localises to the cell inner membrane. Functionally, required for disulfide bond formation in some periplasmic proteins. Acts by oxidizing the DsbA protein. The chain is Disulfide bond formation protein B from Nitrosomonas eutropha (strain DSM 101675 / C91 / Nm57).